The chain runs to 781 residues: Beta-mannosyltransferase 4 (781 aa).

Residues 1 to 17 (MTKSYMPLFRSPRQFKK) are Cytoplasmic-facing. A helical transmembrane segment spans residues 18 to 38 (IYFILIPLILAVIILHVFFDG). Topologically, residues 39–781 (FNKISEYSPT…EKEDDDDIEV (743 aa)) are extracellular. The stretch at 640–733 (KLGDSEAAIK…AKDEDKNEDE (94 aa)) forms a coiled coil. Composition is skewed to basic and acidic residues over residues 663-728 (KAEK…KDED) and 736-750 (KEKN…KSEV). The segment at 663 to 781 (KAEKEKAEKE…EKEDDDDIEV (119 aa)) is disordered. The span at 751-781 (EENGENTNEGGEDDGDGDGEEEKEDDDDIEV) shows a compositional bias: acidic residues.

It belongs to the BMT family.

The protein localises to the membrane. Beta-mannosyltransferase involved in cell wall biosynthesis. Required for the elongation of beta-mannose chains on the acid-labile fraction of cell wall phosphopeptidomannan. In Candida albicans (strain SC5314 / ATCC MYA-2876) (Yeast), this protein is Beta-mannosyltransferase 4 (BMT4).